The following is a 64-amino-acid chain: Palmitoyl-CoA hydrolase (64 aa).

It belongs to the type-B carboxylesterase/lipase family. In terms of assembly, monomer and homotrimer.

It is found in the microsome. It localises to the endoplasmic reticulum. The enzyme catalyses hexadecanoyl-CoA + H2O = hexadecanoate + CoA + H(+). Hydrolysis of a variety of CoA thioesters of long-chain fatty acids. The chain is Palmitoyl-CoA hydrolase from Rattus norvegicus (Rat).